The primary structure comprises 550 residues: MQKFFVTSALPYPNNSSPHLGNLVGALLSGDVYARFKRNQGHEVIYLCGTDEYGTTTMIRARKEGVTCRELCDKYFELHKKVYDWFNIEFDVFGRTSTTKQTEITWEIFNGLYNNGYIEEKTTVQAFCEKCDMYLADTYLKGYCYHDGCRENRVISNGDQCEICQKMIDVNKLINPFCSICLTPPIQKSTDHLYLSLDKLTPLVQQYLDRVEFDSRIMAISKAWLEIGLNPRCITRDLEWGTPIPINLDPKLEKYADKVFYVWFDAPIGYYSILANERDDWREWLNSGVTWVSTQAKDNVPFHSIVFPASVIGSNIELPLIDRICGTDYLLYEGQKFSKSQGVGLFGDKVAEISPKLGINEDYWRFYLMKIRPETQDSSFNLEEFVRIVKTDLVNNIGNFINRVFSLLEKTPYRDLNYQISPEYIEFIKKYEVSMDEFKFRDGLKICLEMSSRGNKFVQSTKPWTMIKDGLDTQEIMTEAVGICWILLNLLKPIIPKSACDMLSNLDTDNQNIFCLIGGSNINIRILNIIKLPFKNIDLKQLREFIEGKN.

The 'HIGH' region signature appears at 10–22 (LPYPNNSSPHLGN). A 'KMSKS' region motif is present at residues 336–340 (KFSKS). Lysine 339 contacts ATP.

The protein belongs to the class-I aminoacyl-tRNA synthetase family.

The enzyme catalyses tRNA(Met) + L-methionine + ATP = L-methionyl-tRNA(Met) + AMP + diphosphate. This is Methionine--tRNA ligase (MARS) from Acanthamoeba polyphaga mimivirus (APMV).